Consider the following 151-residue polypeptide: UPF0208 membrane protein plu3094 (151 aa).

2 consecutive transmembrane segments (helical) span residues 46 to 65 and 69 to 91; these read FGIRFMPPLAIFTLTWQIAL and LGPAVATALFACSLPMQGLWWLG.

The protein belongs to the UPF0208 family.

It is found in the cell inner membrane. This Photorhabdus laumondii subsp. laumondii (strain DSM 15139 / CIP 105565 / TT01) (Photorhabdus luminescens subsp. laumondii) protein is UPF0208 membrane protein plu3094.